Consider the following 702-residue polypeptide: ATP-dependent zinc metalloprotease FtsH (702 aa).

Topologically, residues 1–26 are cytoplasmic; that stretch reads MKKRNKGLVEQTTTEKNNFSRKTAWK. A helical transmembrane segment spans residues 27-47; sequence VFWWVIILAVVIGVLAYIFSP. The Extracellular portion of the chain corresponds to 48-175; that stretch reads RAATAVVESW…FIAPDTRARD (128 aa). The chain crosses the membrane as a helical span at residues 176-196; that stretch reads VLNGLFGLLPIIIFVVFFLLF. Topologically, residues 197 to 702 are cytoplasmic; the sequence is WRSARGISAG…EVKPESETNS (506 aa). 271–278 is an ATP binding site; sequence GPPGTGKT. His-493 contributes to the Zn(2+) binding site. The active site involves Glu-494. 2 residues coordinate Zn(2+): His-497 and Asp-572. Residues 682–702 form a disordered region; it reads EQQAKQKLNKSEVKPESETNS. Over residues 690–702 the composition is skewed to basic and acidic residues; sequence NKSEVKPESETNS.

The protein in the central section; belongs to the AAA ATPase family. In the C-terminal section; belongs to the peptidase M41 family. Homohexamer. Zn(2+) is required as a cofactor.

The protein localises to the cell membrane. Functionally, acts as a processive, ATP-dependent zinc metallopeptidase for both cytoplasmic and membrane proteins. Plays a role in the quality control of integral membrane proteins. In Mycoplasma genitalium (strain ATCC 33530 / DSM 19775 / NCTC 10195 / G37) (Mycoplasmoides genitalium), this protein is ATP-dependent zinc metalloprotease FtsH.